A 609-amino-acid chain; its full sequence is Alpha-fetoprotein (609 aa).

Residues 1-18 form the signal peptide; sequence MKWVESIFLIFLLNFTES. Albumin domains follow at residues 19 to 210, 211 to 402, and 403 to 601; these read RTLH…ATVT, KELR…EELQ, and KYIQ…KLIS. Position 22 (His22) interacts with Cu(2+). Intrachain disulfides connect Cys99/Cys114, Cys113/Cys124, Cys148/Cys193, Cys192/Cys201, Cys224/Cys270, Cys269/Cys277, Cys289/Cys303, and Cys302/Cys313. 3 positions are modified to phosphoserine; by FAM20C: Ser111, Ser115, and Ser117. Residue Asn251 is glycosylated (N-linked (GlcNAc...) asparagine). Position 344 is a phosphoserine; by FAM20C (Ser344). 7 disulfide bridges follow: Cys384–Cys393, Cys416–Cys462, Cys461–Cys472, Cys485–Cys501, Cys500–Cys511, Cys538–Cys583, and Cys582–Cys591. Ser444 and Ser445 each carry phosphoserine; by FAM20C.

Belongs to the ALB/AFP/VDB family. In terms of assembly, dimeric and trimeric forms have been found in addition to the monomeric form. Post-translationally, independent studies suggest heterogeneity of the N-terminal sequence of the mature protein and of the cleavage site of the signal sequence. In terms of processing, sulfated. Plasma. Synthesized by the fetal liver and yolk sac.

Its subcellular location is the secreted. Functionally, binds copper, nickel, and fatty acids as well as, and bilirubin less well than, serum albumin. Only a small percentage (less than 2%) of the human AFP shows estrogen-binding properties. This Homo sapiens (Human) protein is Alpha-fetoprotein (AFP).